Consider the following 483-residue polypeptide: Regulatory protein ViaA (483 aa).

It belongs to the ViaA family. Homodimer. Interacts with RavA.

Its subcellular location is the cytoplasm. Its function is as follows. Component of the RavA-ViaA chaperone complex, which may act on the membrane to optimize the function of some of the respiratory chains. ViaA stimulates the ATPase activity of RavA. The polypeptide is Regulatory protein ViaA (Salmonella paratyphi A (strain ATCC 9150 / SARB42)).